The following is a 170-amino-acid chain: Glycine cleavage system H protein, mitochondrial (170 aa).

The N-terminal 47 residues, 1 to 47 (MLRTTRLWTTRMPTVSKLFLRNSSGNALNKNKLPFLYSSQGPQAVRY), are a transit peptide targeting the mitochondrion. Residues 61-143 (TAFVGITKYA…MGDGWLVKMK (83 aa)) form the Lipoyl-binding domain. Lys102 carries the N6-lipoyllysine modification.

This sequence belongs to the GcvH family. As to quaternary structure, component of the glycine decarboxylase complex (GDC), which is composed of four proteins: P, T, L and H. The cofactor is (R)-lipoate.

It is found in the mitochondrion. In terms of biological role, the glycine cleavage system (glycine decarboxylase complex) catalyzes the degradation of glycine. The H protein shuttles the methylamine group of glycine from the P protein to the T protein. This chain is Glycine cleavage system H protein, mitochondrial (GCV3), found in Saccharomyces cerevisiae (strain ATCC 204508 / S288c) (Baker's yeast).